We begin with the raw amino-acid sequence, 342 residues long: Flap endonuclease 1 (342 aa).

An N-domain region spans residues 1–99 (MGVKIGELIE…RAIEERVRAR (99 aa)). Asp28, Asp81, Glu153, Glu155, Asp174, Asp176, and Asp237 together coordinate Mg(2+). Residues 117-259 (EARKYAQAAL…RALELVKKYK (143 aa)) form an I-domain region.

This sequence belongs to the XPG/RAD2 endonuclease family. FEN1 subfamily. Interacts with PCNA. PCNA stimulates the nuclease activity without altering cleavage specificity. Mg(2+) is required as a cofactor.

Functionally, structure-specific nuclease with 5'-flap endonuclease and 5'-3' exonuclease activities involved in DNA replication and repair. During DNA replication, cleaves the 5'-overhanging flap structure that is generated by displacement synthesis when DNA polymerase encounters the 5'-end of a downstream Okazaki fragment. Binds the unpaired 3'-DNA end and kinks the DNA to facilitate 5' cleavage specificity. Cleaves one nucleotide into the double-stranded DNA from the junction in flap DNA, leaving a nick for ligation. Also involved in the base excision repair (BER) pathway. Acts as a genome stabilization factor that prevents flaps from equilibrating into structures that lead to duplications and deletions. Also possesses 5'-3' exonuclease activity on nicked or gapped double-stranded DNA. The chain is Flap endonuclease 1 from Korarchaeum cryptofilum (strain OPF8).